A 481-amino-acid chain; its full sequence is UDP-N-acetylmuramoylalanine--D-glutamate ligase (481 aa).

Residue Gly-108–Ser-114 coordinates ATP.

The protein belongs to the MurCDEF family.

Its subcellular location is the cytoplasm. The catalysed reaction is UDP-N-acetyl-alpha-D-muramoyl-L-alanine + D-glutamate + ATP = UDP-N-acetyl-alpha-D-muramoyl-L-alanyl-D-glutamate + ADP + phosphate + H(+). Its pathway is cell wall biogenesis; peptidoglycan biosynthesis. In terms of biological role, cell wall formation. Catalyzes the addition of glutamate to the nucleotide precursor UDP-N-acetylmuramoyl-L-alanine (UMA). The sequence is that of UDP-N-acetylmuramoylalanine--D-glutamate ligase from Bifidobacterium longum (strain DJO10A).